The primary structure comprises 184 residues: NADH-quinone oxidoreductase subunit B (184 aa).

4 residues coordinate [4Fe-4S] cluster: cysteine 37, cysteine 38, cysteine 103, and cysteine 132.

The protein belongs to the complex I 20 kDa subunit family. In terms of assembly, NDH-1 is composed of 14 different subunits. Subunits NuoB, C, D, E, F, and G constitute the peripheral sector of the complex. [4Fe-4S] cluster is required as a cofactor.

Its subcellular location is the cell membrane. The catalysed reaction is a quinone + NADH + 5 H(+)(in) = a quinol + NAD(+) + 4 H(+)(out). NDH-1 shuttles electrons from NADH, via FMN and iron-sulfur (Fe-S) centers, to quinones in the respiratory chain. The immediate electron acceptor for the enzyme in this species is believed to be a menaquinone. Couples the redox reaction to proton translocation (for every two electrons transferred, four hydrogen ions are translocated across the cytoplasmic membrane), and thus conserves the redox energy in a proton gradient. The protein is NADH-quinone oxidoreductase subunit B of Nocardia farcinica (strain IFM 10152).